We begin with the raw amino-acid sequence, 312 residues long: Ribosomal RNA small subunit methyltransferase H (312 aa).

Residues 35–37, Asp55, Phe79, Asp101, and Gln108 contribute to the S-adenosyl-L-methionine site; that span reads GGH.

It belongs to the methyltransferase superfamily. RsmH family.

It localises to the cytoplasm. The catalysed reaction is cytidine(1402) in 16S rRNA + S-adenosyl-L-methionine = N(4)-methylcytidine(1402) in 16S rRNA + S-adenosyl-L-homocysteine + H(+). Functionally, specifically methylates the N4 position of cytidine in position 1402 (C1402) of 16S rRNA. This is Ribosomal RNA small subunit methyltransferase H from Buchnera aphidicola subsp. Acyrthosiphon pisum (strain APS) (Acyrthosiphon pisum symbiotic bacterium).